We begin with the raw amino-acid sequence, 334 residues long: MSILQPLEDLSANIVTLVFNIYNFEHLDGSYTSDLKEHNGIYWCVRIQSNKAAKSQKRRVSIYLVCNPNNSSPDWSVTTSFGFRIINSWGKSRNKISTLFNHTFTSNETSKGTSGYCTWDELTAANSGFLVEGRFQIEFDLNVNSSTGIRKEKISKEKYEKYIADGELITDGKTVKVCLALLADNSPILYNLFYVEKPGQTTFHIFDFTYEAILGMVSILQLDSFEVSVYNYRDLLELGQRYQIPSVTDKCEEFLLKTRYVSIETKLKLSEIFELHYLQFRTLERVTCIHHIDNILDDHMDIGEKTYDALLEKMKHLKTQEDGQLCSCKRNHVR.

One can recognise an MATH domain in the interval 14–141 (IVTLVFNIYN…EGRFQIEFDL (128 aa)). One can recognise a BTB domain in the interval 164 to 229 (ADGELITDGK…LQLDSFEVSV (66 aa)).

The protein is BTB and MATH domain-containing protein 39 (bath-39) of Caenorhabditis elegans.